We begin with the raw amino-acid sequence, 89 residues long: Putative membrane protein insertion efficiency factor (89 aa).

Belongs to the UPF0161 family.

The protein resides in the cell membrane. Its function is as follows. Could be involved in insertion of integral membrane proteins into the membrane. In Exiguobacterium sp. (strain ATCC BAA-1283 / AT1b), this protein is Putative membrane protein insertion efficiency factor.